A 44-amino-acid chain; its full sequence is U17-ctenitoxin-Co1a (44 aa).

Disulfide bonds link Cys3/Cys20, Cys10/Cys26, Cys19/Cys40, and Cys28/Cys38.

In terms of tissue distribution, expressed by the venom gland.

It localises to the secreted. Its function is as follows. Omega-agatoxins are antagonists of voltage-sensitive calcium channels (Cav). Toxic to mice by intracerebroventricular injection. The sequence is that of U17-ctenitoxin-Co1a from Ctenus ornatus (Brazilian spider).